A 592-amino-acid polypeptide reads, in one-letter code: MVESGPHSINDDLSTNEYIEQPKFYHDDHASDSNSLSDIDDDNKKHGGLYGTVSRTTTRELPEDLESEISSTHSQDAKEDLEIQHNAAPYSLLNYRDKWCMVALLTACGFWSSLGSPIYYPALKQLEKQFDIDENMVNITVVVYLLFQGLAPTCSGGLADKFGRRPVLLIGMLIYVVASIGLACAPSYGVIVFLRCVQSIGISPSIAISSGVVGDFTVKSERGTFVGATSGFVLLGQAFGSLIGAALAAAWDWRAIFWFLTIGCGASFAICFALLPETKRSIVGNLSIRPKNPLNIAPVTLLPAARRKLKYDNPDYETLDKTKPVFDLTSAFKICALPEIFLSLLPPGLAFAMWTLMLSAISSELSAAPYNYKLTIIGVCYLPAGIGGLIGSFATGKIIDFQYKKKLKVFEEKKAAGIIPEDEKFNIMGARLQSVLPQNFLCVVTYILFGWSCDKGWKIPSILITSCVSSFCAMSTLSAMSTLLVDLYPGKSSTASSCFNFMRCSLSAILMGCFAKMKHSLTVGGTFTLLAGLVFVGNFLMFIPMKHGMRWREEREQRAALKAKSMDQANENGYKLFSKIKFSSPFKSEEKV.

Residues 1 to 77 (MVESGPHSIN…EISSTHSQDA (77 aa)) are disordered. The helical transmembrane segment at 99 to 119 (WCMVALLTACGFWSSLGSPIY) threads the bilayer. N-linked (GlcNAc...) asparagine glycosylation is present at asparagine 138. 5 helical membrane-spanning segments follow: residues 139-159 (ITVV…GGLA), 166-186 (PVLL…ACAP), 188-208 (YGVI…SIAI), 231-251 (GFVL…AAAW), and 255-275 (AIFW…FALL). N-linked (GlcNAc...) asparagine glycosylation occurs at asparagine 285. The next 6 membrane-spanning stretches (helical) occupy residues 340 to 360 (IFLS…MLSA), 374 to 394 (LTII…GSFA), 432 to 452 (LQSV…FGWS), 459 to 479 (IPSI…TLSA), 497 to 517 (SCFN…FAKM), and 523 to 543 (VGGT…LMFI).

Belongs to the major facilitator superfamily. CAR1 family.

Its subcellular location is the cell membrane. Its function is as follows. Multidrug transporter acts as a determinant of resistance to acetic acid, flucytosine and clotrimazole, these 3 compounds acting synergistically against the pathogen. Reduces the intracellular accumulation of the antifungal agents flucytosine and, to a moderate extent, of clotrimazole. Its role in acetic acid resistance may be indirect, presumably through the transport of a still unidentified physiological substrate. This chain is Multidrug transporter AQR1, found in Candida glabrata (strain ATCC 2001 / BCRC 20586 / JCM 3761 / NBRC 0622 / NRRL Y-65 / CBS 138) (Yeast).